The primary structure comprises 2249 residues: MAFHWCDNNLHTTVFTPRDFQVELLATAYERNTIICLGHRSSKEFIALKLLQELSRRARRHGRVSVYLSCEVGTSTEPCSIYTMLTHLTDLRVWQEQPDMQIPFDHCWTDYHVSILRPEGFLYLLETRELLLSSVELIVLEDCHDSAVYQRIRPLFENHIMPAPPADRPRILGLAGPLHSAGCELQQLSAMLATLEQSVLCQIETASDIVTVLRYCSRPHEYIVQCAPFEMDELSLVLADVLNTHKSFLLDHRYDPYEIYGTDQFMDELKDIPDPKVDPLNVINSLLVVLHEMGPWCTQRAAHHFYQCNEKLKVKTPHERHYLLYCLVSTALIQLYSLCEHAFHRHLGSGSDSRQTIERYSSPKVRRLLQTLRCFKPEEVHTQADGLRRMRHQVDQADFNRLSHTLESKCRMVDQMDQPPTETRALVATLEQILHTTEDRQTNRSAARVTPTPTPAHAKPKPSSGANTAQPRTRRRVYTRRHHRDHNDGSDTLCALIYCNQNHTARVLFELLAEISRRDPDLKFLRCQYTTDRVADPTTEPKEAELEHRRQEEVLKRFRMHDCNVLIGTSVLEEGIDVPKCNLVVRWDPPTTYRSYVQCKGRARAAPAYHVILVAPSYKSPTVGSVQLTDRSHRYICATGDTTEADSDSDDSAMPNSSGSDPYTFGTARGTVKILNPEVFSKQPPTACDIKLQEIQDELPAAAQLDTSNSSDEAVSMSNTSPSESSTEQKSRRFQCELSSLTEPEDTSDTTAEIDTAHSLASTTKDLVHQMAQYREIEQMLLSKCANTEPPEQEQSEAERFSACLAAYRPKPHLLTGASVDLGSAIALVNKYCARLPSDTFTKLTALWRCTRNERAGVTLFQYTLRLPINSPLKHDIVGLPMPTQTLARRLAALQACVELHRIGELDDQLQPIGKEGFRALEPDWECFELEPEDEQIVQLSDEPRPGTTKRRQYYYKRIASEFCDCRPVAGAPCYLYFIQLTLQCPIPEEQNTRGRKIYPPEDAQQGFGILTTKRIPKLSAFSIFTRSGEVKVSLELAKERVILTSEQIVCINGFLNYTFTNVLRLQKFLMLFDPDSTENCVFIVPTVKAPAGGKHIDWQFLELIQANGNTMPRAVPDEERQAQPFDPQRFQDAVVMPWYRNQDQPQYFYVAEICPHLSPLSCFPGDNYRTFKHYYLVKYGLTIQNTSQPLLDVDHTSARLNFLTPRYVNRKGVALPTSSEETKRAKRENLEQKQILVPELCTVHPFPASLWRTAVCLPCILYRINGLLLADDIRKQVSADLGLGRQQIEDEDFEWPMLDFGWSLSEVLKKSRESKQKESLKDDTINGKDLADVEKKPTSEETQLDKDSKDDKVEKSAIELIIEGEEKLQEADDFIEIGTWSNDMADDIASFNQEDDDEDDAFHLPVLPANVKFCDQQTRYGSPTFWDVSNGESGFKGPKSSQNKQGGKGKAKGPAKPTFNYYDSDNSLGSSYDDDDNAGPLNYMHHNYSSDDDDVADDIDAGRIAFTSKNEAETIETAQEVEKRQKQLSIIQATNANERQYQQTKNLLIGFNFKHEDQKEPATIRYEESIAKLKTEIESGGMLVPHDQQLVLKRSDAAEAQVAKVSMMELLKQLLPYVNEDVLAKKLGDRRELLLSDLVELNADWVARHEQETYNVMGCGDSFDNYNDHHRLNLDEKQLKLQYERIEIEPPTSTKAITSAILPAGFSFDRQPDLVGHPGPSPSIILQALTMSNANDGINLERLETIGDSFLKYAITTYLYITYENVHEGKLSHLRSKQVANLNLYRLGRRKRLGEYMIATKFEPHDNWLPPCYYVPKELEKALIEAKIPTHHWKLADLLDIKNLSSVQICEMVREKADALGLEQNGGAQNGQLDDSNDSCNDFSCFIPYNLVSQHSIPDKSIADCVEALIGAYLIECGPRGALLFMAWLGVRVLPITRQLDGGNQEQRIPGSTKPNAENVVTVYGAWPTPRSPLLHFAPNATEELDQLLSGFEEFEESLGYKFRDRSYLLQAMTHASYTPNRLTDCYQRLEFLGDAVLDYLITRHLYEDPRQHSPGALTDLRSALVNNTIFASLAVRHGFHKFFRHLSPGLNDVIDRFVRIQQENGHCISEEYYLLSEEECDDAEDVEVPKALGDVFESIAGAIFLDSNMSLDVVWHVYSNMMSPEIEQFSNSVPKSPIRELLELEPETAKFGKPEKLADGRRVRVTVDVFCKGTFRGIGRNYRIAKCTAAKCALRQLKKQGLIAKKD.

The essential for miRNA substrate recognition stretch occupies residues 1–371 (MAFHWCDNNL…SPKVRRLLQT (371 aa)). The important for interaction with loqs isoform PB (loqs-PB) stretch occupies residues 1 to 690 (MAFHWCDNNL…SKQPPTACDI (690 aa)). The helicase domain stretch occupies residues 1–761 (MAFHWCDNNL…AEIDTAHSLA (761 aa)). Residues 1–1042 (MAFHWCDNNL…VSLELAKERV (1042 aa)) form a necessary for processing certain pre-miRNas, such as pre-let 7 and pre-bantam region. 37–44 (LGHRSSKE) contributes to the ATP binding site. The tract at residues 371 to 491 (TLRCFKPEEV…HHRDHNDGSD (121 aa)) is dispensable for activity and substrate recognition. The disordered stretch occupies residues 436–486 (TTEDRQTNRSAARVTPTPTPAHAKPKPSSGANTAQPRTRRRVYTRRHHRDH). Residues 472–484 (RTRRRVYTRRHHR) show a composition bias toward basic residues. Residues 485–648 (DHNDGSDTLC…TGDTTEADSD (164 aa)) form the Helicase C-terminal domain. Residues 496 to 606 (LIYCNQNHTA…VQCKGRARAA (111 aa)) form an essential for miRNA substrate recognition region. Residues 617–761 (SYKSPTVGSV…AEIDTAHSLA (145 aa)) form a dispensable for activity and substrate recognition region. 2 disordered regions span residues 640–665 (GDTTEADSDSDDSAMPNSSGSDPYTF) and 705–757 (LDTS…IDTA). The span at 716 to 726 (SMSNTSPSESS) shows a compositional bias: low complexity. The Dicer dsRNA-binding fold domain maps to 825-920 (AIALVNKYCA…QPIGKEGFRA (96 aa)). Residues 924–957 (DWECFELEPEDEQIVQLSDEPRPGTTKRRQYYYK) are wing domain. The segment at 963-1108 (FCDCRPVAGA…WQFLELIQAN (146 aa)) is platform domain. The PAZ domain maps to 1100–1246 (QFLELIQANG…LVPELCTVHP (147 aa)). Residues 1147–2249 (QYFYVAEICP…KKQGLIAKKD (1103 aa)) form an essential for production of mature miRNAs from pre-miRNAs. Also important for proper formation of the siRISC complex but is dispensable for biogenesis of siRNAs region. The tract at residues 1314–1351 (ESKQKESLKDDTINGKDLADVEKKPTSEETQLDKDSKD) is disordered. Phosphoserine is present on serine 1423. A disordered region spans residues 1426-1477 (FWDVSNGESGFKGPKSSQNKQGGKGKAKGPAKPTFNYYDSDNSLGSSYDDDD). Residues 1437 to 1446 (KGPKSSQNKQ) show a composition bias toward low complexity. Polar residues predominate over residues 1462 to 1471 (YYDSDNSLGS). RNase III domains follow at residues 1698-1919 (ITSA…IECG) and 1993-2150 (FEEF…LDSN). Residues glutamate 1745 and aspartate 1749 each coordinate Mg(2+). A phosphoserine mark is found at serine 1877 and serine 1880. Aspartate 1905, glutamate 1908, glutamate 2032, aspartate 2136, and glutamate 2139 together coordinate Mg(2+). Positions 2175-2241 (VPKSPIRELL…AKCALRQLKK (67 aa)) constitute a DRBM domain.

The protein belongs to the helicase family. Dicer subfamily. In terms of assembly, component of the miRNA-directed RISC loading complex (miRLC), composed of at least Dcr-1, AGO1 and loqs, which processes pre-miRNAs and loads the resulting miRNAs into the Argonaute 1 (AGO1)-containing RNA-induced silencing complex (miRISC). Interacts (via helicase domain) with dicing cofactor loqs isoform-PB (loqs-PB) (via DRBM 3 domain); this interaction enhances processing of pre-miRNAs by increasing substrate binding affinity of the dicer. Also able to interact with loqs isoforms PA and PC, however the relevance of such interactions are unclear in vivo. Different regions of the Dcr-1-loqs-PB heterodimer collaborate to recognize, bind and position the pre-miRNA for Dcr-1 mediated cleavage. In the absence of authentic miRNA substrates, the heterodimer favors a closed, catalytically incompetent, conformation, whereas binding of authentic pre-miRNA substrates stabilizes the relatively rare open, catalytically competent, conformation of the heterodimer. During substrate recognition, the Dcr-1 PAZ domain and pre-miRNA interact with the DRBM 1 domain of loqs-PB, which likely contributes to substrate recognition and stabilization. At the miRNA binding stage, the Dcr-1 DRBM domain and loqs-PB DRBM domains then bind the pre-miRNA in tandem to form a tight 'belt' around the pre-miRNA stem, the pre-miRNA loop is docked in the loop-binding region formed by DUF283, DRBM and part of the N terminus of Dcr-1, and the loqs-PB DRBM 1 and the wing domain of Dcr-1 act together to bind the 5' and 3' pre-miRNA termini within the PAZ and platform domains of Dcr-1. These interactions between the proteins and their pre-miRNA substrate stabilize a distorted form of the pre-miRNA and position the scissile phosphodiester bonds of the pre-miRNA at the RNase III catalytic cleavage sites of Dcr-1. Following Dcr-1 mediated cleavage, the miRNA duplex remains bound to loqs-PB DRBM 1, which dissociates from the Dcr-1 RNase III 1 domain but remains in contact with the PAZ and wing domains, suggesting that the heterodimer presents the mature miRNA to Ago2 for loading into the RNA-induced silencing complex (miRISC). Interacts with AGO2 and Fmr1 to form a RNA-induced silencing complex (siRISC), a ribonucleoprotein (RNP) complex involved in translation regulation; other components of the complex are RpL5, RpL11, AGO2 and Rm62. Interacts with piwi and vas; these interactions occur in the polar granules. Mg(2+) serves as cofactor. Requires Mn(2+) as cofactor.

The protein localises to the cytoplasm. It localises to the cytosol. The catalysed reaction is Endonucleolytic cleavage to 5'-phosphomonoester.. With respect to regulation, activity towards pre-miRNAs is not inhibited by inorganic phosphate. Endoribonuclease which functions in microRNA- (miRNA) gene silencing and, independently of its ribonuclease III activity, also acts in the short interfering RNA- (siRNA) gene silencing pathway. Cleaves hairpin precursor miRNAs (pre-miRNA) to generate mature miRNAs (miRNAs) that are between twenty-one to twenty-four nucleotides in length and function in RNA silencing and post-transcriptional regulation of gene expression. Also functions in miRNA loading and assembly of the Argonaute 1 (AGO1)-containing RNA-induced silencing complex (miRISC), with the miRNAs serving as a guide to direct the miRISC to complementary RNAs to degrade them or prevent their translation. Independently of its catalytic activity, functions in the siRNA silencing pathway by promoting assembly of the siRNA-directed Argonaute 2 (AGO2)-containing RISC (siRISC). Required for the proper formation of a stable intermediate (R2) in siRISC assembly, which is formed from the R1 precursor complex (containing Dcr-2, R2D2 and the siRNA) and is used for assembly of the mature (R3) siRISC complex. It is not required for siRNA biogenesis. During embryogenesis, involved in germline fate determination. Post-transcriptionally regulates mei-P26 expression through the microRNA pathway, which in turn post-translationally regulates myc protein levels; involved in regulating cell and tissue growth. The chain is Endoribonuclease Dcr-1 from Drosophila melanogaster (Fruit fly).